Here is an 838-residue protein sequence, read N- to C-terminus: Rab effector MyRIP (838 aa).

Residues 4-124 (KLDLSGLSNN…TQSLEWFYNN (121 aa)) enclose the RabBD domain. An FYVE-type zinc finger spans residues 58-112 (KFNEHCCIRCCSPFTFLLNPKRQCLDCHYNICKSCCSYSQSERGYICAACQKSRH). Positions 188–237 (ADTLTVALRVAEEAIEEAIAKAENYKDSLEKQNEARYLHEHKEELIEELA) form a coiled coil. 2 stretches are compositionally biased toward polar residues: residues 263 to 290 (QNQKSELPSPTSTQNPLATQNSHSTSQP) and 451 to 484 (TFTQHPPITSPSSGQYTNTETLNSDSETSPSPST). Disordered regions lie at residues 263–331 (QNQK…TEVE), 444–501 (SQHD…ETHL), 525–570 (NFNP…LYSA), and 681–838 (ERDV…EKRN). Basic and acidic residues-rich tracts occupy residues 697 to 736 (NKQEDRVSEKDSGKLRPKERRESKRESKLREMEKQSERQT) and 753 to 838 (RQMK…EKRN). The stretch at 714-833 (KERRESKRES…DLEKKRKSIR (120 aa)) forms a coiled coil.

In terms of assembly, interacts with prkar2aa.

It localises to the cytoplasm. Its subcellular location is the perinuclear region. It is found in the cytoplasmic vesicle. The protein localises to the secretory vesicle. In terms of biological role, may link secretory vesicles to actin filaments. May function as a protein kinase A-anchoring protein (AKAP). May act as a scaffolding protein that links PKA to components of the exocytosis machinery, thus facilitating exocytosis. The sequence is that of Rab effector MyRIP (myrip) from Danio rerio (Zebrafish).